The chain runs to 164 residues: Transcriptional repressor NrdR (164 aa).

Residues 3 to 34 fold into a zinc finger; it reads CPFCSAQDTKVIDSRLVADGVQIRRRRECLSC. The 91-residue stretch at 49–139 folds into the ATP-cone domain; sequence PRLVKTDGTR…VYRSFQDISE (91 aa).

It belongs to the NrdR family. Requires Zn(2+) as cofactor.

In terms of biological role, negatively regulates transcription of bacterial ribonucleotide reductase nrd genes and operons by binding to NrdR-boxes. The protein is Transcriptional repressor NrdR of Alcanivorax borkumensis (strain ATCC 700651 / DSM 11573 / NCIMB 13689 / SK2).